Consider the following 516-residue polypeptide: Calcitonin receptor (516 aa).

Residues 1-24 form the signal peptide; sequence MRFLLLNRFTLLLLLLVSPTPVLQ. Residues 25-146 are Extracellular-facing; it reads APTNLTDSGL…FTPDKLHNAY (122 aa). N-linked (GlcNAc...) asparagine glycans are attached at residues asparagine 28, asparagine 73, asparagine 125, and asparagine 130. 3 cysteine pairs are disulfide-bonded: cysteine 55–cysteine 81, cysteine 72–cysteine 112, and cysteine 95–cysteine 134. Residues 147–169 form a helical membrane-spanning segment; it reads VLYYLALVGHSMSIAALIASMGI. Topologically, residues 170–181 are cytoplasmic; sequence FLFFKNLSCQRV. Residues 182–202 traverse the membrane as a helical segment; the sequence is TLHKNMFLTYILNSIIIIIHL. Over 203–256 the chain is Extracellular; it reads VEVVPNGDLVRRDPMHIFHHNTYMWTMQWELSPPLPLSAHEGKMDPHDSEVISC. A disulfide bridge links cysteine 256 with cysteine 326. A helical membrane pass occupies residues 257–279; the sequence is KILHFFHQYMMACNYFWMLCEGI. At 280–296 the chain is on the cytoplasmic side; the sequence is YLHTLIVMAVFTEDQRL. A helical transmembrane segment spans residues 297–317; sequence RWYYLLGWGFPIVPTIIHAIT. Residues 318–333 are Extracellular-facing; the sequence is RAVYYNDNCWLSTETH. The helical transmembrane segment at 334 to 357 threads the bilayer; that stretch reads LLYIIHGPVMAALVVNFFFLLNIV. Residues 358 to 377 lie on the Cytoplasmic side of the membrane; it reads RVLVTKMRQTHEAEAYMYLK. A helical membrane pass occupies residues 378–396; it reads AVKATMVLVPLLGIQFVVF. Residues 397 to 404 lie on the Extracellular side of the membrane; the sequence is PWRPSNKV. Residues 405-431 form a helical membrane-spanning segment; the sequence is LGKIYDYLMHSLIHFQGFFVATIYCFC. At 432-516 the chain is on the cytoplasmic side; it reads NHEVQVTLKR…MNVIQQDSSA (85 aa). Positions 489-516 are disordered; the sequence is RNPPVSNNEGEEGTEMIPMNVIQQDSSA.

Belongs to the G-protein coupled receptor 2 family. Heterodimer of CALCR and RAMP1, RAMP2 or RAMP3; the receptor complexes function as AMYR1, AMYR2 and AMYR3 receptors, respectively, and respond to amylin/IAPP, calcitonin/CT and CGRP1 ligands. Interacts with GPRASP2.

The protein localises to the cell membrane. Its function is as follows. G protein-coupled receptor activated by ligand peptides amylin (IAPP), calcitonin (CT/CALCA) and calcitonin gene-related peptide type 1 (CGRP1/CALCA). CALCR interacts with receptor-activity-modifying proteins RAMP1, 2 and 3 to form receptor complexes AMYR1, 2 and 3, respectively. IAPP, CT and CGRP1 activate CALCR and AMYRs with distinct modes of receptor activation resulting in specific phenotypes. Ligand binding causes a conformation change that triggers signaling via guanine nucleotide-binding proteins (G proteins) and modulates the activity of downstream effectors. Activates cAMP-dependent pathway. This Rattus norvegicus (Rat) protein is Calcitonin receptor.